The chain runs to 178 residues: Large ribosomal subunit protein uL6 (178 aa).

The protein belongs to the universal ribosomal protein uL6 family. As to quaternary structure, part of the 50S ribosomal subunit.

In terms of biological role, this protein binds to the 23S rRNA, and is important in its secondary structure. It is located near the subunit interface in the base of the L7/L12 stalk, and near the tRNA binding site of the peptidyltransferase center. The protein is Large ribosomal subunit protein uL6 of Kocuria rhizophila (strain ATCC 9341 / DSM 348 / NBRC 103217 / DC2201).